The chain runs to 161 residues: Ribosome maturation factor RimP (161 aa).

It belongs to the RimP family.

It localises to the cytoplasm. Its function is as follows. Required for maturation of 30S ribosomal subunits. The protein is Ribosome maturation factor RimP of Herminiimonas arsenicoxydans.